The chain runs to 391 residues: Na(+)/H(+) antiporter NhaA (391 aa).

11 helical membrane-spanning segments follow: residues 14–34, 59–79, 95–115, 124–144, 154–174, 177–197, 213–233, 261–281, 287–307, 328–348, and 363–383; these read AGGILLLVAVALAMLLANSPL, LLLWINDGLMALFFLLIGLEV, SLPTFAAIGGMLVPAAIYLFF, VGWAIPAATDIAFALGIMALL, VFLLALAIIDDLGVIVIIALF, TDLSMLSLVIAAIAVTGLVAL, IILWIAVLKSGVHATLAGVVI, FLILPVFAFANAGVPLGNVGF, PVPVGIALGLLLGKPIGVLLF, IAPVAVMCGIGFTMSMFIASL, and IGILLGSLFAAVIGYFWLSKV.

It belongs to the NhaA Na(+)/H(+) (TC 2.A.33) antiporter family.

It is found in the cell inner membrane. The enzyme catalyses Na(+)(in) + 2 H(+)(out) = Na(+)(out) + 2 H(+)(in). Its function is as follows. Na(+)/H(+) antiporter that extrudes sodium in exchange for external protons. This chain is Na(+)/H(+) antiporter NhaA, found in Shewanella amazonensis (strain ATCC BAA-1098 / SB2B).